We begin with the raw amino-acid sequence, 415 residues long: Queuine tRNA-ribosyltransferase accessory subunit 2 (415 aa).

Cys-351, Cys-353, Cys-356, and His-382 together coordinate Zn(2+).

It belongs to the queuine tRNA-ribosyltransferase family. QTRT2 subfamily. As to quaternary structure, heterodimer of a catalytic subunit QTRT1 and an accessory subunit QTRT2. Zn(2+) is required as a cofactor.

The protein localises to the cytoplasm. Its subcellular location is the mitochondrion outer membrane. Functionally, non-catalytic subunit of the queuine tRNA-ribosyltransferase (TGT) that catalyzes the base-exchange of a guanine (G) residue with queuine (Q) at position 34 (anticodon wobble position) in tRNAs with GU(N) anticodons (tRNA-Asp, -Asn, -His and -Tyr), resulting in the hypermodified nucleoside queuosine (7-(((4,5-cis-dihydroxy-2-cyclopenten-1-yl)amino)methyl)-7-deazaguanosine). The protein is Queuine tRNA-ribosyltransferase accessory subunit 2 of Homo sapiens (Human).